Consider the following 233-residue polypeptide: UPF0758 protein TTE0897 (233 aa).

Residues 108–230 (SVTSPEDVIN…GISLKEKGYY (123 aa)) form the MPN domain. Zn(2+)-binding residues include H179, H181, and D192. The short motif at 179–192 (HNHPSGDPTPSRED) is the JAMM motif element.

This sequence belongs to the UPF0758 family.

This chain is UPF0758 protein TTE0897, found in Caldanaerobacter subterraneus subsp. tengcongensis (strain DSM 15242 / JCM 11007 / NBRC 100824 / MB4) (Thermoanaerobacter tengcongensis).